We begin with the raw amino-acid sequence, 148 residues long: UPF0260 protein mll2411 (148 aa).

This sequence belongs to the UPF0260 family.

This is UPF0260 protein mll2411 from Mesorhizobium japonicum (strain LMG 29417 / CECT 9101 / MAFF 303099) (Mesorhizobium loti (strain MAFF 303099)).